We begin with the raw amino-acid sequence, 140 residues long: 3-hydroxyacyl-[acyl-carrier-protein] dehydratase FabZ (140 aa).

His48 is a catalytic residue.

Belongs to the thioester dehydratase family. FabZ subfamily.

The protein resides in the cytoplasm. It catalyses the reaction a (3R)-hydroxyacyl-[ACP] = a (2E)-enoyl-[ACP] + H2O. Involved in unsaturated fatty acids biosynthesis. Catalyzes the dehydration of short chain beta-hydroxyacyl-ACPs and long chain saturated and unsaturated beta-hydroxyacyl-ACPs. This chain is 3-hydroxyacyl-[acyl-carrier-protein] dehydratase FabZ, found in Ligilactobacillus salivarius (strain UCC118) (Lactobacillus salivarius).